A 398-amino-acid chain; its full sequence is Argininosuccinate synthase (398 aa).

8–16 (AYSGGLDTT) contacts ATP. Residue Tyr87 participates in L-citrulline binding. Gly117 contributes to the ATP binding site. The L-aspartate site is built by Thr119, Asn123, and Asp124. Asn123 is a binding site for L-citrulline. L-citrulline is bound by residues Arg127, Ser175, Glu259, and Tyr271.

The protein belongs to the argininosuccinate synthase family. Type 1 subfamily. In terms of assembly, homotetramer.

Its subcellular location is the cytoplasm. The enzyme catalyses L-citrulline + L-aspartate + ATP = 2-(N(omega)-L-arginino)succinate + AMP + diphosphate + H(+). Its pathway is amino-acid biosynthesis; L-arginine biosynthesis; L-arginine from L-ornithine and carbamoyl phosphate: step 2/3. This chain is Argininosuccinate synthase, found in Corynebacterium jeikeium (strain K411).